Consider the following 404-residue polypeptide: XK-related protein 8 (404 aa).

8 consecutive transmembrane segments (helical) span residues 14–34 (FVFSVIGVFTFFVDWGADVWV), 44–64 (FFWFGVLVGLMVLSSVLVQMF), 167–187 (AVQFVSVAASTTSIAWMVVDY), 206–226 (SLIYFLWNLLLIAPRVAALAL), 227–247 (FASVVGGYLGLHLLLLWLVFV), 263–283 (GEWLYRATVGIIWYFSWFNVA), 292–312 (AIYHAFITADGAILLVTWWCC), and 319–339 (EPYALALLLTLLLSYLLGLLF).

It belongs to the XK family.

The protein localises to the cell membrane. It catalyses the reaction a 1,2-diacyl-sn-glycero-3-phospho-L-serine(in) = a 1,2-diacyl-sn-glycero-3-phospho-L-serine(out). Functionally, phospholipid scramblase that promotes phosphatidylserine exposure on apoptotic cell surface, possibly by mediating phospholipid scrambling. Phosphatidylserine is a specific marker only present at the surface of apoptotic cells and acts as a specific signal for engulfment. In Tetraodon nigroviridis (Spotted green pufferfish), this protein is XK-related protein 8.